The chain runs to 310 residues: Dicarboxylate carrier UCP2 (310 aa).

Residues 1 to 10 (MVGFRAGDVP) lie on the Mitochondrial intermembrane side of the membrane. A helical transmembrane segment spans residues 11 to 32 (PTATVKFIGAGTAACIADLFTF). Solcar repeat units lie at residues 11-107 (PTAT…VKQF), 115-204 (AGIG…IKDA), and 213-298 (DDLP…LKRA). The Mitochondrial matrix portion of the chain corresponds to 33–78 (PLDTAKVRLQIQGENKASTNMGRGPVKYRGVFGTISTMVRVEGPRS). The chain crosses the membrane as a helical span at residues 79–101 (LYSGLVAGLQRQMSFASVRIGLY). The Mitochondrial intermembrane segment spans residues 102-120 (DSVKQFYTKGSDHAGIGSR). Residues 121-137 (LMAGCTTGAMAVAVAQP) form a helical membrane-spanning segment. The Mitochondrial matrix portion of the chain corresponds to 138-181 (TDVLKVRFQAQVSAGASKRYHSTMDAYRTIAKEEGFRGLWKGTG). Residues 182 to 198 (PNITRNAIVNCTELVTY) traverse the membrane as a helical segment. Over 199–215 (DLIKDALLKSSLMTDDL) the chain is Mitochondrial intermembrane. Residues 216-235 (PCHFTSAFGAGFCTTIIASP) form a helical membrane-spanning segment. Residues 236-269 (VDVVKTRYMNSAQGQYSSALNCAVAMLTKKGPKA) lie on the Mitochondrial matrix side of the membrane. A helical membrane pass occupies residues 270–292 (FFKGFMPSFLRLGSWNVVMFVTY). The tract at residues 277–299 (SFLRLGSWNVVMFVTYEQLKRAM) is purine nucleotide binding. The Mitochondrial intermembrane segment spans residues 293–310 (EQLKRAMMAARQNWHTPL).

The protein belongs to the mitochondrial carrier (TC 2.A.29) family. As to quaternary structure, homotetramer. Adopts an asymmetrical dimer of dimers functional form.

It is found in the mitochondrion inner membrane. It catalyses the reaction L-aspartate(out) + phosphate(in) + H(+)(in) = L-aspartate(in) + phosphate(out) + H(+)(out). It carries out the reaction oxaloacetate(out) + phosphate(in) + H(+)(in) = oxaloacetate(in) + phosphate(out) + H(+)(out). The enzyme catalyses (S)-malate(out) + phosphate(in) + H(+)(in) = (S)-malate(in) + phosphate(out) + H(+)(out). The catalysed reaction is malonate(out) + phosphate(in) + H(+)(in) = malonate(in) + phosphate(out) + H(+)(out). It catalyses the reaction sulfate(out) + phosphate(in) + H(+)(in) = sulfate(in) + phosphate(out) + H(+)(out). It carries out the reaction (S)-malate(out) = (S)-malate(in). The enzyme catalyses L-aspartate(out) = L-aspartate(in). The catalysed reaction is phosphate(in) = phosphate(out). It catalyses the reaction chloride(in) = chloride(out). It carries out the reaction H(+)(in) = H(+)(out). The enzyme catalyses a long-chain fatty acid(out) = a long-chain fatty acid(in). In terms of biological role, UCP are mitochondrial transporter proteins that create proton leaks across the inner mitochondrial membrane, thus uncoupling oxidative phosphorylation from ATP synthesis. As a result, energy is dissipated in the form of heat. Functionally, antiporter that exports dicarboxylate intermediates of the Krebs cycle in exchange for phosphate plus a proton across the inner membrane of mitochondria, a process driven by mitochondrial motive force with an overall impact on glycolysis, glutaminolysis and glutathione-dependent redox balance. Continuous export of oxaloacetate and related four-carbon dicarboxylates from mitochondrial matrix into the cytosol negatively regulates the oxidation of acetyl-CoA substrates via the Krebs cycle, lowering the ATP/ADP ratio and reactive oxygen species (ROS) production. May mediate inducible proton entry into the mitochondrial matrix affecting ATP turnover as a protection mechanism against oxidative stress. The proton currents are most likely associated with fatty acid flipping across the inner membrane of mitochondria in a metabolic process regulated by free fatty acids and purine nucleotides. This is Dicarboxylate carrier UCP2 (ucp2) from Danio rerio (Zebrafish).